The sequence spans 1359 residues: Regulatory-associated protein of TOR 2 (1359 aa).

Disordered stretches follow at residues 17–64 and 782–819; these read SSAA…PQVA and SDNS…QHSD. Residues 32 to 50 are compositionally biased toward basic and acidic residues; sequence HLVDDHLPVENGPDPRRDV. Positions 782 to 805 are enriched in polar residues; that stretch reads SDNSATARDGRISTSSPIATNSIM. Over residues 806–819 the composition is skewed to low complexity; sequence HGSPQSDDSSQHSD. WD repeat units follow at residues 1041-1080, 1087-1127, 1139-1178, 1181-1221, 1228-1269, 1273-1312, and 1321-1359; these read RFEL…PVNT, SDRG…GGQK, RSAG…VNTI, TADS…RLVY, PRSE…EPYL, AHRG…LTII, and QRIG…YQVR.

This sequence belongs to the WD repeat RAPTOR family. As to quaternary structure, the target of rapamycin complex 1 (TORC1) is composed of at least RAPTOR, LST8 and TOR.

Functionally, component of TORC1 complex, which is an essential cell growth regulator that controls plant development. Acts by recruiting substrates for TOR. Acts by activating transcription, protein synthesis and ribosome biogenesis, and inhibiting mRNA degradation and autophagy. This is Regulatory-associated protein of TOR 2 (RAPTOR2) from Oryza sativa subsp. japonica (Rice).